A 121-amino-acid polypeptide reads, in one-letter code: Large ribosomal subunit protein bL12 (121 aa).

This sequence belongs to the bacterial ribosomal protein bL12 family. As to quaternary structure, homodimer. Part of the ribosomal stalk of the 50S ribosomal subunit. Forms a multimeric L10(L12)X complex, where L10 forms an elongated spine to which 2 to 4 L12 dimers bind in a sequential fashion. Binds GTP-bound translation factors.

Functionally, forms part of the ribosomal stalk which helps the ribosome interact with GTP-bound translation factors. Is thus essential for accurate translation. The sequence is that of Large ribosomal subunit protein bL12 from Pectobacterium carotovorum subsp. carotovorum (strain PC1).